A 262-amino-acid chain; its full sequence is tRNA pseudouridine synthase A (262 aa).

Residue Asp51 is the Nucleophile of the active site. A substrate-binding site is contributed by Tyr109.

It belongs to the tRNA pseudouridine synthase TruA family. Homodimer.

It carries out the reaction uridine(38/39/40) in tRNA = pseudouridine(38/39/40) in tRNA. Its function is as follows. Formation of pseudouridine at positions 38, 39 and 40 in the anticodon stem and loop of transfer RNAs. This Legionella pneumophila (strain Paris) protein is tRNA pseudouridine synthase A.